We begin with the raw amino-acid sequence, 690 residues long: Elongation factor G (690 aa).

The tr-type G domain occupies 8-283 (EDYRNFGIMA…AVVDYLPSPV (276 aa)). Residues 17-24 (AHIDAGKT), 81-85 (DTPGH), and 135-138 (NKMD) each bind GTP.

The protein belongs to the TRAFAC class translation factor GTPase superfamily. Classic translation factor GTPase family. EF-G/EF-2 subfamily.

The protein localises to the cytoplasm. Functionally, catalyzes the GTP-dependent ribosomal translocation step during translation elongation. During this step, the ribosome changes from the pre-translocational (PRE) to the post-translocational (POST) state as the newly formed A-site-bound peptidyl-tRNA and P-site-bound deacylated tRNA move to the P and E sites, respectively. Catalyzes the coordinated movement of the two tRNA molecules, the mRNA and conformational changes in the ribosome. This Rhodopseudomonas palustris (strain BisB5) protein is Elongation factor G.